A 498-amino-acid polypeptide reads, in one-letter code: ATP synthase subunit beta, chloroplastic (498 aa).

172 to 179 (GGAGVGKT) is an ATP binding site.

Belongs to the ATPase alpha/beta chains family. F-type ATPases have 2 components, CF(1) - the catalytic core - and CF(0) - the membrane proton channel. CF(1) has five subunits: alpha(3), beta(3), gamma(1), delta(1), epsilon(1). CF(0) has four main subunits: a(1), b(1), b'(1) and c(9-12).

The protein localises to the plastid. It localises to the chloroplast thylakoid membrane. It carries out the reaction ATP + H2O + 4 H(+)(in) = ADP + phosphate + 5 H(+)(out). Produces ATP from ADP in the presence of a proton gradient across the membrane. The catalytic sites are hosted primarily by the beta subunits. The sequence is that of ATP synthase subunit beta, chloroplastic from Nandina domestica (Heavenly bamboo).